The following is an 87-amino-acid chain: Keratin-associated protein 7-1 (87 aa).

The tract at residues 43 to 84 (GCGCNGYSSLGYSFGGSNINNLGGCYGGSFYRPWGSGSGFGY) is 11 X 2 AA repeats of G-[YCGS].

The protein belongs to the KRTAP type 7 family. As to quaternary structure, interacts with hair keratins. In terms of tissue distribution, expressed in the upper portion of the hair cortex.

In the hair cortex, hair keratin intermediate filaments are embedded in an interfilamentous matrix, consisting of hair keratin-associated proteins (KRTAP), which are essential for the formation of a rigid and resistant hair shaft through their extensive disulfide bond cross-linking with abundant cysteine residues of hair keratins. The matrix proteins include the high-sulfur and high-glycine-tyrosine keratins. This Homo sapiens (Human) protein is Keratin-associated protein 7-1 (KRTAP7-1).